We begin with the raw amino-acid sequence, 138 residues long: DNA-directed RNA polymerase II subunit 4 (138 aa).

Ser2 bears the N-acetylserine mark.

It belongs to the eukaryotic RPB4 RNA polymerase subunit family. In terms of assembly, component of the RNA polymerase II complex consisting of at least 12 subunits. Interacts with NRPB7.

The protein resides in the nucleus. In terms of biological role, DNA-dependent RNA polymerase catalyzes the transcription of DNA into RNA using the four ribonucleoside triphosphates as substrates. Second largest component of RNA polymerase II which synthesizes mRNA precursors and many functional non-coding RNAs. Proposed to contribute to the polymerase catalytic activity and forms the polymerase active center together with the largest subunit. Pol II is the central component of the basal RNA polymerase II transcription machinery. It is composed of mobile elements that move relative to each other. The sequence is that of DNA-directed RNA polymerase II subunit 4 (NRPB4) from Arabidopsis thaliana (Mouse-ear cress).